The chain runs to 138 residues: Protein NrdI (138 aa).

This sequence belongs to the NrdI family.

In terms of biological role, probably involved in ribonucleotide reductase function. In Paracoccus denitrificans (strain Pd 1222), this protein is Protein NrdI.